The primary structure comprises 1174 residues: Tight junction protein 2 (1174 aa).

Residues 10 to 97 (TVTLQKDSKR…IAAIVVKRPR (88 aa)) form the PDZ 1 domain. Phosphoserine occurs at positions 107, 127, 130, 140, 145, 147, 151, 173, 195, and 217. Basic and acidic residues predominate over residues 125–137 (GRSARSGYSERSR). The tract at residues 125–290 (GRSARSGYSE…AGQPDSDRPI (166 aa)) is disordered. The segment covering 146–214 (RSWEDSPERG…DYGRPGERSH (69 aa)) has biased composition (basic and acidic residues). Residues 220 to 235 (RGYDRGYDRGYDRGYD) show a composition bias toward basic and acidic residues. Ser239 carries the phosphoserine modification. Basic and acidic residues-rich tracts occupy residues 243 to 266 (EYGRRTQPDARHAGSRSRSREHLR) and 274 to 288 (LRGRPDHAGQPDSDR). The PDZ 2 domain occupies 291 to 369 (GVLLMKSKAN…KLQLVVLRDS (79 aa)). Phosphoserine is present on residues Ser309, Ser382, Ser384, Ser390, Ser399, Ser408, Ser414, and Ser415. The segment at 391 to 430 (EIESNRSFSPEERRQQYSDYDYHSSNEKLKERPNSREDMQ) is disordered. A compositionally biased stretch (basic and acidic residues) spans 399–430 (SPEERRQQYSDYDYHSSNEKLKERPNSREDMQ). Thr439 carries the phosphothreonine modification. The tract at residues 456 to 490 (ENSKEPRYQEEPPAPQPKAAPRTFLRPSPEDEAIY) is disordered. Ser483 is modified (phosphoserine). The 82-residue stretch at 493 to 574 (NTKMVRFKKG…GEMVTILAQS (82 aa)) folds into the PDZ 3 domain. Tyr558 bears the Phosphotyrosine mark. The region spanning 588-653 (GDSFFIRSHF…PNKSRAEQMA (66 aa)) is the SH3 domain. The Guanylate kinase-like domain maps to 679–860 (MKKNLRKSRE…WFGSLKDTIQ (182 aa)). Phosphoserine occurs at positions 686 and 886. Position 889 is a phosphothreonine (Thr889). Residues Ser897 and Ser904 each carry the phosphoserine modification. 2 disordered regions span residues 904 to 1065 (SDFE…VLGK) and 1100 to 1174 (DIYA…DTEL). Phosphothreonine is present on residues Thr909 and Thr917. Basic and acidic residues predominate over residues 940-951 (VQHEESIRKPSP). Ser950, Ser962, Ser970, Ser990, and Ser1052 each carry phosphoserine. Positions 978–1000 (EPPKAKTQNREESFDISRSHDYK) are enriched in basic and acidic residues. Positions 1044-1056 (ESEEVGEGSEEQE) are enriched in acidic residues. Residue Tyr1102 is modified to Phosphotyrosine. Phosphoserine occurs at positions 1131 and 1143. Residues 1150-1159 (YRQQLSEHSK) are compositionally biased toward basic and acidic residues. The segment at 1172–1174 (TEL) is interaction with SCRIB.

This sequence belongs to the MAGUK family. Homodimer. Interacts (via PDZ2 domain) with TJP1/ZO1 (via PDZ2 domain). Interacts with UBN1. Interacts with SCRIB. Interacts with OCLN. Interacts with SAFB in the nucleus. Interacts with USP53 (via the C-terminal region). Interacts with claudins, including CLDN1, CLDN2, CLDN3, CLDN5 and CLDN7. Interacts with CLDN18. Interacts (via N-terminus) with CTNNA1. In terms of processing, phosphorylated.

It is found in the cell junction. It localises to the adherens junction. Its subcellular location is the cell membrane. The protein resides in the nucleus. The protein localises to the tight junction. Functionally, plays a role in tight junctions and adherens junctions. Acts as a positive regulator of RANKL-induced osteoclast differentiation, potentially via mediating downstream transcriptional activity. In Canis lupus familiaris (Dog), this protein is Tight junction protein 2.